Here is a 214-residue protein sequence, read N- to C-terminus: MLDREGFRPNVGIILLNARNEVFWGKRLREHSWQFPQGGIKYGETPMQAMYRELHEETGLHPEHVKIIGRTRDWLRYEVPDKFIKREVRGHYRGQKQIWFLLRMVGRDCDICLRATDHPEFDAWRWNEYWVPLDAVIEFKRDVYQLALTELSRFLRRPAQRAEKPRGPRVSRYPRVIGAQAQTLTIVDTSVVCSEIEVEASTLDEMPPHVIVGK.

Residues 6–149 enclose the Nudix hydrolase domain; the sequence is GFRPNVGIIL…KRDVYQLALT (144 aa). The short motif at 38-59 is the Nudix box element; it reads GGIKYGETPMQAMYRELHEETG.

It belongs to the Nudix hydrolase family. RppH subfamily. It depends on a divalent metal cation as a cofactor.

Its function is as follows. Accelerates the degradation of transcripts by removing pyrophosphate from the 5'-end of triphosphorylated RNA, leading to a more labile monophosphorylated state that can stimulate subsequent ribonuclease cleavage. This is RNA pyrophosphohydrolase from Burkholderia cenocepacia (strain HI2424).